The sequence spans 698 residues: Elongation factor G 1 (698 aa).

The tr-type G domain maps to 8 to 290; that stretch reads ERYRNIGIVA…AVVDYLPAPI (283 aa). GTP-binding positions include 17–24, 88–92, and 142–145; these read AHVDAGKT, DTPGH, and NKMD.

It belongs to the TRAFAC class translation factor GTPase superfamily. Classic translation factor GTPase family. EF-G/EF-2 subfamily.

It localises to the cytoplasm. Its function is as follows. Catalyzes the GTP-dependent ribosomal translocation step during translation elongation. During this step, the ribosome changes from the pre-translocational (PRE) to the post-translocational (POST) state as the newly formed A-site-bound peptidyl-tRNA and P-site-bound deacylated tRNA move to the P and E sites, respectively. Catalyzes the coordinated movement of the two tRNA molecules, the mRNA and conformational changes in the ribosome. This is Elongation factor G 1 from Shewanella denitrificans (strain OS217 / ATCC BAA-1090 / DSM 15013).